The primary structure comprises 809 residues: Valine--tRNA ligase (809 aa).

The 'HIGH' region motif lies at proline 60–histidine 70. Positions arginine 546 to serine 550 match the 'KMSKS' region motif. Lysine 549 contributes to the ATP binding site.

It belongs to the class-I aminoacyl-tRNA synthetase family. ValS type 2 subfamily.

It is found in the cytoplasm. The enzyme catalyses tRNA(Val) + L-valine + ATP = L-valyl-tRNA(Val) + AMP + diphosphate. Functionally, catalyzes the attachment of valine to tRNA(Val). As ValRS can inadvertently accommodate and process structurally similar amino acids such as threonine, to avoid such errors, it has a 'posttransfer' editing activity that hydrolyzes mischarged Thr-tRNA(Val) in a tRNA-dependent manner. The sequence is that of Valine--tRNA ligase from Sulfurisphaera tokodaii (strain DSM 16993 / JCM 10545 / NBRC 100140 / 7) (Sulfolobus tokodaii).